Here is an 82-residue protein sequence, read N- to C-terminus: Small ribosomal subunit protein uS17 (82 aa).

Belongs to the universal ribosomal protein uS17 family. As to quaternary structure, part of the 30S ribosomal subunit.

In terms of biological role, one of the primary rRNA binding proteins, it binds specifically to the 5'-end of 16S ribosomal RNA. The sequence is that of Small ribosomal subunit protein uS17 from Shewanella sp. (strain W3-18-1).